The sequence spans 1000 residues: C-module-binding factor A (1000 aa).

Residues 113–280 (PREWQEYLSH…ISYFSSLPHT (168 aa)) form the JmjC domain. The PHD-type; atypical zinc finger occupies 489–544 (KIKCHRCEKRFKKFSIIFCTNCNARFCEQCVVNTFGQNFQVLMKRNEWECFCCKGL). The RING-type; degenerate zinc-finger motif lies at 492-542 (CHRCEKRFKKFSIIFCTNCNARFCEQCVVNTFGQNFQVLMKRNEWECFCCK). Disordered regions lie at residues 561-647 (RILN…SSYS) and 660-818 (SYGS…KNLK). Composition is skewed to low complexity over residues 574-647 (NNNN…SSYS), 660-683 (SYGS…NNNN), 700-710 (SSSSGSGSSNS), 732-751 (NNNN…NNHH), and 760-789 (NNNN…STST). A compositionally biased stretch (basic and acidic residues) spans 805-818 (DNDKPKGRPPKNLK). A DNA-binding region (a.T hook) is located at residues 810–818 (KGRPPKNLK).

As to quaternary structure, monomer.

The protein resides in the nucleus. Functionally, transcriptional regulator involved in phagocytosis and pinocytosis. Both activates and represses transcription. Regulates expression of acaA, carA, pkaC, csaA, cotB and lagC. Promotes amplification of the tRNA gene-associated retrotransposon TRE5-A, a mobile genetic element formerly called as Dictyostelium repetitive element (DRE). Suppresses agnC and agnE encoding argonaute proteins which are part of a RNA interference pathway controlling TRE5-A amplification. Required for amplification of both sense and antisense RNA transcripts, but does not activate their promoters found in A-module and C-module of the TRE5-A, respectively. Nevertheless, binds to distinct DNA sequences containing A and T stretches within the C-module in vitro. This Dictyostelium discoideum (Social amoeba) protein is C-module-binding factor A.